Here is a 472-residue protein sequence, read N- to C-terminus: Inhibitor of Apoptosis OPG037 (472 aa).

ANK repeat units lie at residues 97–126 (DGNY…DPNA), 130–161 (HNKT…KINN), 233–263 (DGNT…DVNK), 267–297 (FGDS…VITD), 322–351 (YDST…ICED), and 353–377 (MYYA…SVDS).

This sequence belongs to the orthopoxvirus OPG037 protein family. As to quaternary structure, may interact with host caspase-9-Apaf-1 complex.

The protein localises to the host cytoplasm. Inhibits host apoptosis. Acts by associating with host apoptosome. The polypeptide is Inhibitor of Apoptosis OPG037 (OPG037) (Homo sapiens (Human)).